The sequence spans 157 residues: GTP-dependent dephospho-CoA kinase (157 aa).

Asp40, Asp59, Lys61, Glu107, and Asp128 together coordinate GTP.

This sequence belongs to the GTP-dependent DPCK family.

It carries out the reaction 3'-dephospho-CoA + GTP = GDP + CoA + H(+). Its pathway is cofactor biosynthesis; coenzyme A biosynthesis. In terms of biological role, catalyzes the GTP-dependent phosphorylation of the 3'-hydroxyl group of dephosphocoenzyme A to form coenzyme A (CoA). The protein is GTP-dependent dephospho-CoA kinase of Desulfurococcus amylolyticus (strain DSM 18924 / JCM 16383 / VKM B-2413 / 1221n) (Desulfurococcus kamchatkensis).